Consider the following 236-residue polypeptide: Small ribosomal subunit protein uS5 (236 aa).

The S5 DRBM domain maps to 61-124 (ENQEIIDIAL…NYAKLNIIEI (64 aa)).

This sequence belongs to the universal ribosomal protein uS5 family. As to quaternary structure, part of the 30S ribosomal subunit. Contacts protein S4.

Functionally, with S4 and S12 plays an important role in translational accuracy. The polypeptide is Small ribosomal subunit protein uS5 (Pyrococcus horikoshii (strain ATCC 700860 / DSM 12428 / JCM 9974 / NBRC 100139 / OT-3)).